The following is a 223-amino-acid chain: Putative PAN domain-containing protein R486 (223 aa).

An N-terminal signal peptide occupies residues 1–23 (MSQTAIIIWIVVIIILLVLGGLG). A disordered region spans residues 39 to 73 (PTPINPPSSITPIQPINPPSSITPIQPSGPPSGGN). Over residues 45–64 (PSSITPIQPINPPSSITPIQ) the composition is skewed to low complexity. 2 PAN domains span residues 80–155 (CPAY…EDGC) and 159–223 (ARYN…KMPH). 2 disulfides stabilise this stretch: Cys-80–Cys-155 and Cys-109–Cys-131. 3 N-linked (GlcNAc...) asparagine; by host glycosylation sites follow: Asn-162, Asn-189, and Asn-213. Cys-182 and Cys-204 are disulfide-bonded.

It is found in the secreted. The protein resides in the virion. This Acanthamoeba polyphaga mimivirus (APMV) protein is Putative PAN domain-containing protein R486.